Consider the following 334-residue polypeptide: N-acetylmuramoyl-L-alanine amidase sle1 (334 aa).

A signal peptide spans 1–25; that stretch reads MQKKVIAAIIGTSAISAVAATQANA. Residues 27–70 enclose the LysM 1 domain; it reads TTHTVKPGESVWAISNKYGISIAKLKSLNNLTSNLIFPNQVLKV. Residues 71–86 are compositionally biased toward low complexity; the sequence is SGSSNSTSNSSRPSTN. The disordered stretch occupies residues 71–90; the sequence is SGSSNSTSNSSRPSTNSGGG. The LysM 2 domain maps to 91–134; it reads SYYTVQAGDSLSLIASKYGTTYQNIMRLNGLNNFFIYPGQKLKV. Residues 137–156 form a disordered region; the sequence is TASSSNSTSNSSRPSTNSSG. The LysM 3 domain occupies 158–201; the sequence is SYYTVQAGDSLSLIASKYGTTYQNIMRLNGLNNFFIYPGQKLKV. A Peptidase C51 domain is found at 210-334; sequence GSTTTTNRGY…YQVNNYRYIH (125 aa).

The protein localises to the secreted. The protein resides in the cell surface. It carries out the reaction Hydrolyzes the link between N-acetylmuramoyl residues and L-amino acid residues in certain cell-wall glycopeptides.. Its function is as follows. Peptidoglycan hydrolase involved in the splitting of the septum during cell division. This Staphylococcus aureus (strain MRSA252) protein is N-acetylmuramoyl-L-alanine amidase sle1 (sle1).